A 402-amino-acid chain; its full sequence is Putative F-box protein At1g70970 (402 aa).

The region spanning 4-52 (SSSETLHVEDLQTEIMSWLPLKSLLRFVIVSKKWASIIRGEQFKALYLR) is the F-box domain.

This is Putative F-box protein At1g70970 from Arabidopsis thaliana (Mouse-ear cress).